The sequence spans 345 residues: Chorismate synthase (345 aa).

The protein belongs to the chorismate synthase family. In terms of assembly, homotetramer. The cofactor is FMNH2.

The enzyme catalyses 5-O-(1-carboxyvinyl)-3-phosphoshikimate = chorismate + phosphate. The protein operates within metabolic intermediate biosynthesis; chorismate biosynthesis; chorismate from D-erythrose 4-phosphate and phosphoenolpyruvate: step 7/7. In Carsonella ruddii (strain PV), this protein is Chorismate synthase (aroC).